Here is an 852-residue protein sequence, read N- to C-terminus: Protein mono-ADP-ribosyltransferase PARP8 (852 aa).

Disordered stretches follow at residues 113-134 (NGEE…NDSE) and 289-310 (SPSY…EQDG). The span at 123-134 (VEEDSEGDNDSE) shows a compositional bias: acidic residues. C332, C366, C375, and C394 each carry ADP-ribosylcysteine. The 228-residue stretch at 615–842 (EMTQAPYLEI…QEGGIHKEIL (228 aa)) folds into the PARP catalytic domain. Residues 748-775 (QKVSSKDEPASSSKSSNASQSQKKGQQS) form a disordered region. The segment covering 757 to 775 (ASSSKSSNASQSQKKGQQS) has biased composition (low complexity).

This sequence belongs to the ARTD/PARP family. In terms of processing, auto-mono-ADP-ribosylated.

The enzyme catalyses L-cysteinyl-[protein] + NAD(+) = S-(ADP-D-ribosyl)-L-cysteinyl-[protein] + nicotinamide + H(+). Mono-ADP-ribosyltransferase that mediates mono-ADP-ribosylation of target proteins. The sequence is that of Protein mono-ADP-ribosyltransferase PARP8 from Mus musculus (Mouse).